A 200-amino-acid polypeptide reads, in one-letter code: Serine/arginine-rich splicing factor RSZ23 (200 aa).

Positions 2-71 (ARVYVGNLDP…NGWRVELSTK (70 aa)) constitute an RRM domain. The CCHC-type zinc-finger motif lies at 86–103 (MKCYECGEPGHFARECRL). The segment at 105–200 (IGSGGLGSGR…REESPYANNA (96 aa)) is disordered. A compositionally biased stretch (basic residues) spans 113–139 (GRRRSRSRSRSPRYRGRSRSRSPRYRR).

The protein belongs to the splicing factor SR family. Post-translationally, extensively phosphorylated on serine residues in the RS domain. As to expression, expressed in roots, leaves and immature seeds.

It localises to the nucleus. In terms of biological role, involved in pre-mRNA splicing. In protoplast assay, enhances splicing efficiency of WAXY intron 1 and alters the selection of the 5'-splice sites by stimulating site 1 (proximal site). This chain is Serine/arginine-rich splicing factor RSZ23 (RSZ23), found in Oryza sativa subsp. japonica (Rice).